The chain runs to 61 residues: Venom protein 22.1 (61 aa).

The first 18 residues, Met-1 to Gly-18, serve as a signal peptide directing secretion.

The protein belongs to the non-disulfide-bridged peptide (NDBP) superfamily. Long chain multifunctional peptide (group 2) family. As to expression, expressed by the venom gland.

The protein localises to the secreted. The chain is Venom protein 22.1 from Lychas mucronatus (Chinese swimming scorpion).